A 418-amino-acid polypeptide reads, in one-letter code: 26S proteasome regulatory subunit 6B (418 aa).

Residue Met-1 is modified to N-acetylmethionine. A Phosphoserine modification is found at Ser-21. Thr-25 is modified (phosphothreonine). Phosphoserine is present on Ser-28. An ATP-binding site is contributed by 206–213; the sequence is GPPGCGKT. Lys-397 and Lys-401 each carry N6-acetyllysine.

This sequence belongs to the AAA ATPase family. In terms of assembly, component of the 19S proteasome regulatory particle complex. The 26S proteasome consists of a 20S core particle (CP) and two 19S regulatory subunits (RP). The regulatory particle is made of a lid composed of 9 subunits, a base containing 6 ATPases including PSMC4 and few additional components. Interacts with NR1I3. Interacts with PAAF1. Interacts with TRIM5. Interacts with ZFAND1.

The protein localises to the cytoplasm. It localises to the nucleus. In terms of biological role, component of the 26S proteasome, a multiprotein complex involved in the ATP-dependent degradation of ubiquitinated proteins. This complex plays a key role in the maintenance of protein homeostasis by removing misfolded or damaged proteins, which could impair cellular functions, and by removing proteins whose functions are no longer required. Therefore, the proteasome participates in numerous cellular processes, including cell cycle progression, apoptosis, or DNA damage repair. PSMC4 belongs to the heterohexameric ring of AAA (ATPases associated with diverse cellular activities) proteins that unfolds ubiquitinated target proteins that are concurrently translocated into a proteolytic chamber and degraded into peptides. In Mus musculus (Mouse), this protein is 26S proteasome regulatory subunit 6B (Psmc4).